Consider the following 269-residue polypeptide: Cytochrome c oxidase subunit 3 (269 aa).

At 1–22 the chain is on the mitochondrial matrix side; the sequence is MTHLERSRHQQHPFHMVMPSPW. Residues 23–41 traverse the membrane as a helical segment; it reads PIVVSFALLSLALSTALTM. At 42-48 the chain is on the mitochondrial intermembrane side; sequence HGYIGNM. Residues 49-73 form a helical membrane-spanning segment; it reads NMVYLALFVLLTSSILWFRDIVAEA. At 74–80 the chain is on the mitochondrial matrix side; it reads TYLGDHT. The helical transmembrane segment at 81–114 threads the bilayer; the sequence is MAVRKGINLGFLMFVLSEVLIFAGLFWAYFHSAM. Residues 115 to 137 lie on the Mitochondrial intermembrane side of the membrane; it reads SPDVTLGACWPPVGIEAVQPTEL. A helical transmembrane segment spans residues 138-161; the sequence is PLLNTIILLSSGATVTYSHHALIA. The Mitochondrial matrix portion of the chain corresponds to 162-164; the sequence is GNR. The helical transmembrane segment at 165–188 threads the bilayer; that stretch reads NKALSGLLITFWLIVIFVTCQYIE. The Mitochondrial intermembrane portion of the chain corresponds to 189–201; sequence YTNAAFTISDGVY. A helical transmembrane segment spans residues 202-230; it reads GSVFYAGTGLHFLHMVMLAAMLGVNYWRM. The Mitochondrial matrix portion of the chain corresponds to 231–248; it reads RNYHLTAGHHVGYETTII. The helical transmembrane segment at 249 to 265 threads the bilayer; that stretch reads YTHVLDVIWLFLYVVFY. At 266–269 the chain is on the mitochondrial intermembrane side; sequence WWGV.

Belongs to the cytochrome c oxidase subunit 3 family. As to quaternary structure, component of the cytochrome c oxidase (complex IV, CIV), a multisubunit enzyme composed of 12 subunits. The complex is composed of a catalytic core of 3 subunits COX1, COX2 and COX3, encoded in the mitochondrial DNA, and 9 supernumerary subunits COX4, COX5A (or COX5B), COX6, COX7, COX8, COX9, COX12, COX13 and COX26, which are encoded in the nuclear genome. The complex exists as a monomer or a dimer and forms supercomplexes (SCs) in the inner mitochondrial membrane with a dimer of ubiquinol-cytochrome c oxidoreductase (cytochrome b-c1 complex, complex III, CIII), resulting in 2 different assemblies (supercomplexes III(2)IV and III(2)IV(2)). Post-translationally, the N-terminus is blocked.

It is found in the mitochondrion inner membrane. The catalysed reaction is 4 Fe(II)-[cytochrome c] + O2 + 8 H(+)(in) = 4 Fe(III)-[cytochrome c] + 2 H2O + 4 H(+)(out). Component of the cytochrome c oxidase, the last enzyme in the mitochondrial electron transport chain which drives oxidative phosphorylation. The respiratory chain contains 3 multisubunit complexes succinate dehydrogenase (complex II, CII), ubiquinol-cytochrome c oxidoreductase (cytochrome b-c1 complex, complex III, CIII) and cytochrome c oxidase (complex IV, CIV), that cooperate to transfer electrons derived from NADH and succinate to molecular oxygen, creating an electrochemical gradient over the inner membrane that drives transmembrane transport and the ATP synthase. Cytochrome c oxidase is the component of the respiratory chain that catalyzes the reduction of oxygen to water. Electrons originating from reduced cytochrome c in the intermembrane space (IMS) are transferred via the dinuclear copper A center (CU(A)) of COX2 and heme A of COX1 to the active site in COX1, a binuclear center (BNC) formed by heme A3 and copper B (CU(B)). The BNC reduces molecular oxygen to 2 water molecules using 4 electrons from cytochrome c in the IMS and 4 protons from the mitochondrial matrix. COX3 is a catalytic core subunit. The protein is Cytochrome c oxidase subunit 3 (COX3) of Saccharomyces cerevisiae (strain ATCC 204508 / S288c) (Baker's yeast).